The sequence spans 317 residues: L-lactate dehydrogenase (317 aa).

NAD(+) contacts are provided by residues V17, D38, K43, and 82-83 (GA). Substrate-binding positions include Q85, R91, and 123–126 (NPVD). NAD(+) is bound by residues 121 to 123 (VAN) and S146. 151–154 (DSAR) contacts substrate. Residues R156 and H171 each coordinate beta-D-fructose 1,6-bisphosphate. H178 (proton acceptor) is an active-site residue. A Phosphotyrosine modification is found at Y224. Substrate is bound at residue T233.

This sequence belongs to the LDH/MDH superfamily. LDH family. As to quaternary structure, homotetramer.

Its subcellular location is the cytoplasm. The enzyme catalyses (S)-lactate + NAD(+) = pyruvate + NADH + H(+). Its pathway is fermentation; pyruvate fermentation to lactate; (S)-lactate from pyruvate: step 1/1. With respect to regulation, allosterically activated by fructose 1,6-bisphosphate (FBP). Catalyzes the conversion of lactate to pyruvate. The chain is L-lactate dehydrogenase from Moorella thermoacetica (strain ATCC 39073 / JCM 9320).